A 502-amino-acid polypeptide reads, in one-letter code: Cytochrome P450 81D1 (502 aa).

A helical transmembrane segment spans residues 6 to 26 (IRVVLYSIFSLIFLIISFKFL). Cys-440 contributes to the heme binding site.

Belongs to the cytochrome P450 family. Heme is required as a cofactor.

Its subcellular location is the membrane. The chain is Cytochrome P450 81D1 (CYP81D1) from Arabidopsis thaliana (Mouse-ear cress).